The following is a 314-amino-acid chain: Deoxymugineic acid synthase 1-B (314 aa).

A disordered region spans residues 1–22 (MGAGDKTAAGMPRIGMGTAVQG). Asp44 contacts NADP(+). The active-site Proton donor is the Tyr49. Residue His112 coordinates substrate. NADP(+) is bound by residues 158–159 (AN), Gln180, 258–266 (FDEARMREN), and 273–281 (ELTEEERRR).

This sequence belongs to the aldo/keto reductase family. In terms of tissue distribution, mostly expressed in root tissues, observed in mesocotyl and embryonic roots, seedling roots, crown and seedling leafes, mature bracts, anthers, pistil, caryopsis and embryos.

It carries out the reaction 2'-deoxymugineate + NAD(+) = 3''-deamino-3''-oxonicotianamine + NADH + H(+). The enzyme catalyses 2'-deoxymugineate + NADP(+) = 3''-deamino-3''-oxonicotianamine + NADPH + H(+). It functions in the pathway siderophore biosynthesis. Catalyzes the reduction of a 3''-keto intermediate during the biosynthesis of 2'-deoxymugineic acid (DMA) from L-Met. Involved in the formation of phytosiderophores (MAs) belonging to the mugineic acid family and required to acquire iron. The polypeptide is Deoxymugineic acid synthase 1-B (Triticum aestivum (Wheat)).